A 909-amino-acid chain; its full sequence is E3 ubiquitin-protein ligase HACE1 (909 aa).

Residues 1 to 21 (MERAMEQLNRLTRSLRRARTV) form an N-terminal helix important for homodimerization region. 7 ANK repeats span residues 23-55 (LPEDNETAVYTLMPMVMADQHRSVSELLSNSKF), 64-93 (VKRSLLHIAANCGSVECLVLLLKKGANPNY), 97-126 (SGCTPLHLAARNGQKKCMSKLLEYSADVNI), 130-159 (EGLTAIHWLAVNGRTELLHDLVQHVSDVDV), 163-192 (MGQTALHVACQNGHKTTVQCLLDSGADINR), 196-226 (SGATPLYFACSHGQRDTAQILLLRGAKYLPD), and 228-253 (NGVTPLDLCVQGGYGETCEVLIQYHP). The segment at 398 to 433 (QDQDAASIPPFEPPGPGSYENLSTGTRESKPDALAG) is disordered. An HECT domain is found at 574 to 909 (NCAKLKQGIA…HCGSYGYTMA (336 aa)). Cysteine 876 (glycyl thioester intermediate) is an active-site residue.

In terms of assembly, homodimer. The homodimer is autoinhibited and stabilized by its N-terminal helix. Interacts with RAB1 (RAB1A, RAB1B or RAB1C), RAB4 (RAB4A or RAB4B) and RAB11 (RAB11A or RAB11B); in a GTP-dependent manner. Interacts with the 26S proteasomal complex through the 20S core proteasomal subunit. Interacts with RARB. In terms of processing, autoubiquitinated. As to expression, expressed in multiple tissues including heart, brain and kidney.

It localises to the golgi apparatus. It is found in the golgi stack membrane. The protein resides in the cytoplasm. Its subcellular location is the endoplasmic reticulum. The enzyme catalyses S-ubiquitinyl-[E2 ubiquitin-conjugating enzyme]-L-cysteine + [acceptor protein]-L-lysine = [E2 ubiquitin-conjugating enzyme]-L-cysteine + N(6)-ubiquitinyl-[acceptor protein]-L-lysine.. It functions in the pathway protein modification; protein ubiquitination. Sterically autoinhibited in its dimeric state. E3 ubiquitin-protein ligase involved in Golgi membrane fusion and regulation of small GTPases. Acts as a regulator of Golgi membrane dynamics during the cell cycle: recruited to Golgi membrane by Rab proteins and regulates postmitotic Golgi membrane fusion. Acts by mediating ubiquitination during mitotic Golgi disassembly, ubiquitination serving as a signal for Golgi reassembly later, after cell division. Specifically binds GTP-bound RAC1, mediating ubiquitination and subsequent degradation of active RAC1, thereby playing a role in host defense against pathogens. May also act as a transcription regulator via its interaction with RARB. This is E3 ubiquitin-protein ligase HACE1 (HACE1) from Homo sapiens (Human).